We begin with the raw amino-acid sequence, 280 residues long: Ribosomal RNA small subunit methyltransferase A (280 aa).

Residues H15, L17, G42, E64, D89, and N109 each contribute to the S-adenosyl-L-methionine site.

This sequence belongs to the class I-like SAM-binding methyltransferase superfamily. rRNA adenine N(6)-methyltransferase family. RsmA subfamily.

It localises to the cytoplasm. The catalysed reaction is adenosine(1518)/adenosine(1519) in 16S rRNA + 4 S-adenosyl-L-methionine = N(6)-dimethyladenosine(1518)/N(6)-dimethyladenosine(1519) in 16S rRNA + 4 S-adenosyl-L-homocysteine + 4 H(+). Specifically dimethylates two adjacent adenosines (A1518 and A1519) in the loop of a conserved hairpin near the 3'-end of 16S rRNA in the 30S particle. May play a critical role in biogenesis of 30S subunits. The polypeptide is Ribosomal RNA small subunit methyltransferase A (Synechococcus sp. (strain WH7803)).